Reading from the N-terminus, the 639-residue chain is UPF0313 protein CLJ_B0249 (639 aa).

The 272-residue stretch at 295-566 (AIKEVKFSIT…RMQRSLLQFS (272 aa)) folds into the Radical SAM core domain. [4Fe-4S] cluster-binding residues include cysteine 309, cysteine 313, and cysteine 316. The segment at 597 to 639 (YNKPYKKSHKKNNAKNKNNNYNKNKDVSKKNKKNSLSKHKKRK) is disordered. Basic residues-rich tracts occupy residues 600–610 (PYKKSHKKNNA) and 626–639 (KNKKNSLSKHKKRK).

It belongs to the UPF0313 family. [4Fe-4S] cluster is required as a cofactor.

This is UPF0313 protein CLJ_B0249 from Clostridium botulinum (strain 657 / Type Ba4).